A 93-amino-acid polypeptide reads, in one-letter code: Stage III sporulation protein D (93 aa).

Positions 4–75 (YIKERTIKIG…IRHLRGGEAT (72 aa)) constitute an HTH deoR-type domain. Positions 21-40 (KTVRVIAKEFGVSKSTVHKD) form a DNA-binding region, H-T-H motif.

Functionally, this protein regulates the transcription of sigK, which encodes mother cell chamber RNA polymerase sigma-factor (sigma K). The polypeptide is Stage III sporulation protein D (spoIIID) (Bacillus subtilis (strain 168)).